A 360-amino-acid chain; its full sequence is Phospho-N-acetylmuramoyl-pentapeptide-transferase (360 aa).

Transmembrane regions (helical) follow at residues 27–47 (ILSV…MIRM), 73–93 (TMGG…WGDL), 97–117 (FVWI…VDDW), 132–152 (WKYL…FFTA), 164–184 (FFKS…YFVI), 199–219 (GLAI…AYAG), 236–256 (AGEL…FLWF), 263–283 (VFMG…MAVI), 288–308 (IVLF…MLQV), and 337–357 (KIIV…LATL).

This sequence belongs to the glycosyltransferase 4 family. MraY subfamily. Mg(2+) is required as a cofactor.

Its subcellular location is the cell inner membrane. The catalysed reaction is UDP-N-acetyl-alpha-D-muramoyl-L-alanyl-gamma-D-glutamyl-meso-2,6-diaminopimeloyl-D-alanyl-D-alanine + di-trans,octa-cis-undecaprenyl phosphate = di-trans,octa-cis-undecaprenyl diphospho-N-acetyl-alpha-D-muramoyl-L-alanyl-D-glutamyl-meso-2,6-diaminopimeloyl-D-alanyl-D-alanine + UMP. It functions in the pathway cell wall biogenesis; peptidoglycan biosynthesis. Catalyzes the initial step of the lipid cycle reactions in the biosynthesis of the cell wall peptidoglycan: transfers peptidoglycan precursor phospho-MurNAc-pentapeptide from UDP-MurNAc-pentapeptide onto the lipid carrier undecaprenyl phosphate, yielding undecaprenyl-pyrophosphoryl-MurNAc-pentapeptide, known as lipid I. The protein is Phospho-N-acetylmuramoyl-pentapeptide-transferase of Alcanivorax borkumensis (strain ATCC 700651 / DSM 11573 / NCIMB 13689 / SK2).